Reading from the N-terminus, the 1303-residue chain is MLRAKLVDDPQIKYASLHNPLPTQLHAYVWPFLIIWPAFFAVYLSPERYDTYIQGQEWTFVWSGSIITAQSLLWLMTKWNINIQTLFTATKARSLDSAQLIKVIPVANAGSAEICPLHCDTMGGKKTFSFLFQKRRFLYYPERQCFAPLSYVLDAEPKPPVKVFQQAQGLTSKEEIDRIQHHYGDNTFDIPVPTFMELFKEHAVAPFFVFQVFCVGLWMLDEYWYYSLFTLFMLVVFESTVVWQRQRTLNEFRGMNIKPYDVWVYRQKKWQELTSDKLLPGDLMSVNRTKEDSGVACDILLIEGSAIVNEAMLSGESTPLLKESIQLRPGDDLIDPDGLDKNAFVHGGTKVLQITHHNSNGEDGSEKARKLSSGVPLPPDNGAVGVVVKTGFETSQGSLVRTMIYSTERVSANNVEALLFILFLLIFAIAAAWYVWQEGVAKDRKRSKLLLDCVLIVTSVVPPELPMELSLAVNTSLAALSKFAIFCTEPFRIPFAGRVDVACFDKTGTLTGEDLVVDGIAGLTLGHEGADVGKDGAHTELAKSANVPLDTTLVLASAHALVKLDEGEVVGDPMEKATLQWLGWTLGRNDTLMSKAAALAGPRTVESVQIKRRFQFSSALKRQSTIATVVTADRKTSKKTKATFVGVKGAPETIRTMLVNTPPHYEETFKYFTRNGARVLALAYKYLSEESELSQGRINGYIREEIEADLIFAGFLVLQCPLKEDAIKAVRMLNESSHRVVMITGDNPLTAVHVARKVEIVDRDVLILDAPEDDMSGTRLVWRSIDDKFNRDVDPTQDLDPEIIETKDICITGYALAKFKGQKAFSTLLRHTWVYARVSPKQKEDILVGLKDAGYTTLMCGDGTNDVGALKQAHVGVALLNGSPEDLAKIAEHYRTTKMKEIYEKQVSMMQRFNQPPPPVPVQIAHLYPPGPRNPHYQKAMEREAQRKGAATLATAGNQTEHIPTITSPGAQALQQSNANLTPQQQRQQQASIAAAGFADKLTSSMLEQELDDSEPPTIKLGDASVAAPFTSKLANVIAIPNILRQGRCTLVATIQMYKILALNCLISAYSLSVIYLDGIKFGDGQVTISGMLMSVCFLSISRAKSVEGLSKERPQPNIFNVYIIGSVLGQFAIHIATLIYLSNYVYSIEPRKSDIDLEGEFEPSLLNSAIYLLQLIQQISTFSINYQGRPFRESIRENKAMYWGLVAASGVAFSCATEFIPELNEKMRLVPFSTEFKVTLTVLMIIDYAGCWIIENVLKNLFSDFRPKDIAVRRPDQLQREMERKKQEELETQAEKERQRKV.

A run of 2 helical transmembrane segments spans residues 25–45 (LHAYVWPFLIIWPAFFAVYLS) and 57–77 (EWTFVWSGSIITAQSLLWLMT). Residues 158–191 (KPPVKVFQQAQGLTSKEEIDRIQHHYGDNTFDIP) are A-domain; part 1. 2 helical membrane-spanning segments follow: residues 201–221 (EHAVAPFFVFQVFCVGLWMLD) and 223–243 (YWYYSLFTLFMLVVFESTVVW). The tract at residues 256 to 408 (NIKPYDVWVY…LVRTMIYSTE (153 aa)) is A-domain; part 2. N-linked (GlcNAc...) asparagine glycosylation occurs at Asn287. Residues 415–435 (VEALLFILFLLIFAIAAAWYV) form a helical membrane-spanning segment. A glycan (N-linked (GlcNAc...) asparagine) is linked at Asn474. The tract at residues 484-513 (AIFCTEPFRIPFAGRVDVACFDKTGTLTGE) is P-domain; part 1. Catalysis depends on Asp505, which acts as the 4-aspartylphosphate intermediate. Residues Asp505 and Thr507 each coordinate Mg(2+). ATP is bound at residue 505–507 (DKT). Positions 515 to 721 (LVVDGIAGLT…FAGFLVLQCP (207 aa)) are N-domain. Residue Asn589 is glycosylated (N-linked (GlcNAc...) asparagine). ATP is bound by residues Phe616 and Arg678. A P-domain; part 2 region spans residues 724 to 883 (EDAIKAVRML…HVGVALLNGS (160 aa)). A glycan (N-linked (GlcNAc...) asparagine) is linked at Asn734. ATP-binding positions include Asp746 and 862-866 (DGTND). Position 862 (Asp862) interacts with Mg(2+). The interval 884-1019 (PEDLAKIAEH…ELDDSEPPTI (136 aa)) is arm-like. An N-linked (GlcNAc...) asparagine glycan is attached at Asn958. Residues 1020 to 1035 (KLGDASVAAPFTSKLA) form a P-domain; part 3 region. 5 helical membrane passes run 1060 to 1080 (ILALNCLISAYSLSVIYLDGI), 1082 to 1102 (FGDGQVTISGMLMSVCFLSIS), 1122 to 1142 (VYIIGSVLGQFAIHIATLIYL), 1201 to 1221 (AMYWGLVAASGVAFSCATEFI), and 1239 to 1259 (VTLTVLMIIDYAGCWIIENVL). The segment at 1277–1303 (DQLQREMERKKQEELETQAEKERQRKV) is disordered.

Belongs to the cation transport ATPase (P-type) (TC 3.A.3) family. Type V subfamily. The cofactor is Mg(2+).

It is found in the endoplasmic reticulum membrane. It carries out the reaction [protein]-with a C-terminal TM segment(out) + ATP + H2O = [protein]-with a C-terminal TM segment(in) + ADP + phosphate + H(+). With respect to regulation, the ATPase activity is stimulated by phosphatidylinositol 4-phosphate (PI4P). Functionally, endoplasmic reticulum (ER) translocase required to remove mitochondrial transmembrane proteins mistargeted to the endoplasmic reticulum. Acts as a dislocase that mediates the ATP-dependent extraction of mislocalized mitochondrial transmembrane proteins from the endoplasmic reticulum membrane. Works in concert with the ER Ca(2+) pump srcA to support ER homeostasis. With srcA, also supports redox homeostasis and virulence. The chain is Endoplasmic reticulum transmembrane helix translocase spfA from Aspergillus fumigatus (strain ATCC MYA-4609 / CBS 101355 / FGSC A1100 / Af293) (Neosartorya fumigata).